Consider the following 248-residue polypeptide: DNA repair protein RecO (248 aa).

This sequence belongs to the RecO family.

Its function is as follows. Involved in DNA repair and RecF pathway recombination. In Oleidesulfovibrio alaskensis (strain ATCC BAA-1058 / DSM 17464 / G20) (Desulfovibrio alaskensis), this protein is DNA repair protein RecO.